The primary structure comprises 636 residues: Beta-galactosidase-1-like protein 2 (636 aa).

The first 32 residues, 1–32 (MTTWSLRRRPARTLGLLLLVVLGFLVLRRLDW), serve as a signal peptide directing secretion. Residue E201 is the Proton donor of the active site. The Nucleophile role is filled by E277.

Belongs to the glycosyl hydrolase 35 family.

The protein localises to the secreted. This is Beta-galactosidase-1-like protein 2 (GLB1L2) from Homo sapiens (Human).